Reading from the N-terminus, the 431-residue chain is Venom metalloproteinase 1 (431 aa).

Positions 1–22 (MDLFILTRFILFLSFFMKSIHC) are cleaved as a signal peptide. 4 N-linked (GlcNAc...) asparagine glycosylation sites follow: N64, N113, N148, and N187. Residues 228–428 (DLLMKTSRRL…TSAACLKDTY (201 aa)) enclose the Peptidase M12B domain. 2 disulfides stabilise this stretch: C340/C423 and C379/C407. H363 is a binding site for Zn(2+). Residue E364 is part of the active site. Zn(2+) is bound by residues H367 and H373. N-linked (GlcNAc...) asparagine glycosylation occurs at N414.

This sequence in the C-terminal section; belongs to the venom metalloproteinase (M12B) family. Monomer. The cofactor is Zn(2+). In terms of tissue distribution, expressed by the venom gland.

Its subcellular location is the secreted. Its activity is regulated as follows. The gelatinase activity is inhibited by EDTA. The recombinant protein has gelatinase activity. In vivo, injection of this recombinant into fifth instar L.oleracea (host) larvae results in partial insect mortality associated with the molt to sixth instar, with surviving insects showing retarded development and growth. In Eulophus pennicornis (Parasitoid wasp), this protein is Venom metalloproteinase 1.